The following is a 698-amino-acid chain: Protein SST2 (698 aa).

The interval Glu-10–Thr-203 is fungal-DR. Ser-252 is subject to Phosphoserine. The DEP domain occupies Ser-273–Lys-358. The residue at position 408 (Ser-408) is a Phosphoserine. Residues Lys-420–Ser-689 form the RGS domain. Residue Ser-539 is modified to Phosphoserine; by MAPK. Residues Phe-545 to Leu-586 are disordered. Low complexity predominate over residues Asp-551 to Asp-570. Ser-587 is modified (phosphoserine).

In terms of processing, phosphorylated by FUS3 and KSS1.

Its function is as follows. Desensitization to alpha-factor pheromone. Is involved in regulating the signaling pathway for responding to mating pheromone. This is Protein SST2 (SST2) from Saccharomyces cerevisiae (strain ATCC 204508 / S288c) (Baker's yeast).